A 359-amino-acid chain; its full sequence is Mitochondrial glutathione transporter SLC25A39 (359 aa).

Over 1-14 (MADQDPGGISPLQQ) the chain is Mitochondrial intermembrane. 3 Solcar repeats span residues 9 to 151 (ISPL…LKAF), 159 to 243 (SDLY…VKSW), and 253 to 347 (TSVG…GKNF). The chain crosses the membrane as a helical span at residues 15–35 (MVASGAGAVVTSLFMTPLDVV). The Mitochondrial matrix portion of the chain corresponds to 36-121 (KVRLQSQRPS…VKIVRHEGTR (86 aa)). Positions 74, 78, 88, and 94 each coordinate [2Fe-2S] cluster. A helical transmembrane segment spans residues 122-142 (TLWSGLPATLVMTVPATAAYF). The Mitochondrial intermembrane segment spans residues 143–164 (TAYDQLKAFLCGRALTSDLYAP). The chain crosses the membrane as a helical span at residues 165 to 185 (MVAGALARLGTVTVISPLELV). At 186–214 (RTKLQAQHLSYRELGTCVRAAVAQGGWRS) the chain is on the mitochondrial matrix side. A helical membrane pass occupies residues 215–235 (LWLGWGPTALRDVPFSALYWF). At 236 to 255 (NYELVKSWLSGLRPKDQTSV) the chain is on the mitochondrial intermembrane side. The chain crosses the membrane as a helical span at residues 256–276 (GISFVAGGISGMVAATLTLPF). Residues 277 to 317 (DVVKTQRQVALGAVEALRVMPLNTDSTWLLLRRILAESGTR) are Mitochondrial matrix-facing. The helical transmembrane segment at 318-338 (GLFAGFLPRIIKAAPSCAIMI) threads the bilayer. Residues 339–359 (STYEFGKNFFQRLNREQLLSP) are Mitochondrial intermembrane-facing.

It belongs to the mitochondrial carrier (TC 2.A.29) family. In terms of processing, cleaved and degraded by AFG3L2; degradation by AFG3L2 is regulated by the ability of SLC25A39 to bind iron-sulfur. In absence of mitochondrial glutathione, SLC25A39 binds iron-sulfur, preventing cleavage and degradation by AFG3L2. The presence of mitochondrial glutathione prevents iron-sulfur-binding to SLC25A39, promoting cleavage and degradation by AFG3L2.

Its subcellular location is the mitochondrion inner membrane. The catalysed reaction is glutathione(in) = glutathione(out). The activity of SLC25A39 is regulated by levels of mitochondrial glutathione via its ability to bind [2Fe-2S] iron-sulfur cluster. Upon physiological levels of mitochondrial glutathione, glutathione prevents iron-sulfur-binding to SLC25A39 promoting cleavage and degradation by AFG3L2. Upon depletion of mitochondrial glutathione, SLC25A39 binds iron-sulfur, preventing cleavage and degradation by AFG3L2. Mitochondrial transporter required for glutathione import into mitochondria. Glutathione, which plays key roles in oxidative metabolism, is produced exclusively in the cytosol and is imported in many organelles. Mitochondrial glutathione is required for the activity and stability of proteins containing iron-sulfur clusters, as well as erythropoiesis. The chain is Mitochondrial glutathione transporter SLC25A39 (SLC25A39) from Bos taurus (Bovine).